Here is a 755-residue protein sequence, read N- to C-terminus: Dynamin-1-like protein (755 aa).

Met1 carries the post-translational modification N-acetylmethionine. The region spanning 22-315 is the Dynamin-type G domain; the sequence is IIQLPQIVVV…LMHHIRDCLP (294 aa). The segment at 32 to 39 is G1 motif; sequence GTQSSGKS. Residue 32-40 coordinates GTP; sequence GTQSSGKSS. The G2 motif stretch occupies residues 58–60; it reads VTR. Residues 159 to 162 are G3 motif; sequence DLPG. A G4 motif region spans residues 228-231; it reads TKLD. Residues 228–234 and 259–262 each bind GTP; these read TKLDLMD and NRSQ. The G5 motif stretch occupies residues 258–261; that stretch reads VNRS. The tract at residues 357–502 is middle domain; it reads YCNTIEGTAK…NEMVHNLVAI (146 aa). The interval 461-704 is interaction with GSK3B; that stretch reads NYSTQELLRF…NHVKDTLQSE (244 aa). Residues 515-582 are b domain; the sequence is ADACGLMNNN…IQDNRRETKN (68 aa). The tract at residues 536–610 is disordered; the sequence is ELPSAVSRDK…QEPTTGNWRG (75 aa). Ser542 carries the phosphoserine modification. Glycyl lysine isopeptide (Lys-Gly) (interchain with G-Cter in SUMO) cross-links involve residues Lys545 and Lys548. Low complexity predominate over residues 550–567; it reads PSALAPASQEPSPAASAE. Residue Ser561 is modified to Phosphoserine. The span at 568–581 shows a compositional bias: basic and acidic residues; that stretch reads ADGKLIQDNRRETK. Residues Lys571 and Lys581 each participate in a glycyl lysine isopeptide (Lys-Gly) (interchain with G-Cter in SUMO) cross-link. Over residues 586 to 600 the composition is skewed to gly residues; that stretch reads AGGGIGDGGRIGDGG. 2 O-linked (GlcNAc) threonine glycosylation sites follow: Thr604 and Thr605. Lys613 participates in a covalent cross-link: Glycyl lysine isopeptide (Lys-Gly) (interchain with G-Cter in SUMO). N6-acetyllysine; alternate is present on Lys616. Lys616 is covalently cross-linked (Glycyl lysine isopeptide (Lys-Gly) (interchain with G-Cter in SUMO); alternate). A Glycyl lysine isopeptide (Lys-Gly) (interchain with G-Cter in SUMO) cross-link involves residue Lys625. Ser626 bears the Phosphoserine mark. A Glycyl lysine isopeptide (Lys-Gly) (interchain with G-Cter in SUMO) cross-link involves residue Lys627. Position 635 is a phosphoserine; by CDK1 (Ser635). Ser656 carries the post-translational modification Phosphoserine; by CAMK1 and PKA. Cys663 bears the S-nitrosocysteine mark. The GED domain maps to 663–754; that stretch reads CEVIERLIKS…IIAEIRETHL (92 aa). An important for homodimerization region spans residues 673–687; the sequence is YFLIVRKNIQDSVPK.

Belongs to the TRAFAC class dynamin-like GTPase superfamily. Dynamin/Fzo/YdjA family. In terms of assembly, homotetramer; dimerizes through the N-terminal GTP-middle region of one molecule binding to the GED domain of another DNM1L molecule. Oligomerizes in a GTP-dependent manner to form membrane-associated tubules with a spiral pattern. Interacts with GSK3B and MARCHF5. Interacts (via the GTPase and B domains) with UBE2I; the interaction promotes sumoylation of DNM1L, mainly in its B domain. Interacts with PPP3CA; the interaction dephosphorylates DNM1L and regulates its transition to mitochondria. Interacts with BCL2L1 isoform BCL-X(L) and CLTA; DNM1L and BCL2L1 isoform BCL-X(L) may form a complex in synaptic vesicles that also contains clathrin and MFF. Interacts with MFF; the interaction is inhinited by C11orf65/MFI. Interacts with FIS1. Interacts with MIEF2 and MIEF1; GTP-dependent this regulates GTP hydrolysis and DNM1L oligomerization. Interacts with PGAM5; this interaction leads to dephosphorylation at Ser-656 and activation of GTPase activity and eventually to mitochondria fragmentation. Interacts with RALBP1; during mitosis, recruits DNM1L to the mitochondrion and mediates its activation by the mitotic kinase cyclin B-CDK1. Interacts with FUNDC1; this interaction recruits DNM1L/DRP1 at ER-mitochondria contact sites. Phosphorylation/dephosphorylation events on two sites near the GED domain regulate mitochondrial fission. Phosphorylation on Ser-656 by CAMK1 and PKA inhibits the GTPase activity, leading to a defect in mitochondrial fission promoting mitochondrial elongation. Dephosphorylated on this site by PPP3CA which promotes mitochondrial fission. Phosphorylation on Ser-635 by PINK1 activates the GTPase activity and promotes mitochondrial fission. Phosphorylation on Ser-635 by CDK1 also promotes mitochondrial fission. Phosphorylated in a circadian manner at Ser-656. Dephosphorylated by PGAM5. In terms of processing, sumoylated on various lysine residues within the B domain, probably by MUL1. Sumoylation positively regulates mitochondrial fission. Desumoylated by SENP5 during G2/M transition of mitosis. Appears to be linked to its catalytic activity. Post-translationally, S-nitrosylation increases DNM1L dimerization, mitochondrial fission and causes neuronal damage. O-GlcNAcylation augments the level of the GTP-bound active form of DNM1L and induces translocation from the cytoplasm to mitochondria in cardiomyocytes. It also decreases phosphorylation at Ser-656. In terms of processing, ubiquitination by MARCHF5 affects mitochondrial morphology. Expressed in all tissues tested (at protein level). Longer isoforms are preferentially expressed in brain.

It is found in the cytoplasm. The protein resides in the cytosol. The protein localises to the golgi apparatus. Its subcellular location is the endomembrane system. It localises to the mitochondrion outer membrane. It is found in the peroxisome. The protein resides in the membrane. The protein localises to the clathrin-coated pit. Its subcellular location is the cytoplasmic vesicle. It localises to the secretory vesicle. It is found in the synaptic vesicle membrane. The catalysed reaction is GTP + H2O = GDP + phosphate + H(+). Functionally, functions in mitochondrial and peroxisomal division. Mediates membrane fission through oligomerization into membrane-associated tubular structures that wrap around the scission site to constrict and sever the mitochondrial membrane through a GTP hydrolysis-dependent mechanism. The specific recruitment at scission sites is mediated by membrane receptors like MFF, MIEF1 and MIEF2 for mitochondrial membranes. While the recruitment by the membrane receptors is GTP-dependent, the following hydrolysis of GTP induces the dissociation from the receptors and allows DNM1L filaments to curl into closed rings that are probably sufficient to sever a double membrane. Acts downstream of PINK1 to promote mitochondrial fission in a PRKN-dependent manner. Plays an important role in mitochondrial fission during mitosis. Through its function in mitochondrial division, ensures the survival of at least some types of postmitotic neurons, including Purkinje cells, by suppressing oxidative damage. Required for normal brain development, including that of cerebellum. Facilitates developmentally regulated apoptosis during neural tube formation. Required for a normal rate of cytochrome c release and caspase activation during apoptosis; this requirement may depend upon the cell type and the physiological apoptotic cues. Required for formation of endocytic vesicles. Proposed to regulate synaptic vesicle membrane dynamics through association with BCL2L1 isoform Bcl-X(L) which stimulates its GTPase activity in synaptic vesicles; the function may require its recruitment by MFF to clathrin-containing vesicles. Required for programmed necrosis execution. Rhythmic control of its activity following phosphorylation at Ser-656 is essential for the circadian control of mitochondrial ATP production. The sequence is that of Dynamin-1-like protein from Rattus norvegicus (Rat).